Reading from the N-terminus, the 257-residue chain is Acyl-[acyl-carrier-protein]--UDP-N-acetylglucosamine O-acyltransferase (257 aa).

It belongs to the transferase hexapeptide repeat family. LpxA subfamily. Homotrimer.

It is found in the cytoplasm. It catalyses the reaction a (3R)-hydroxyacyl-[ACP] + UDP-N-acetyl-alpha-D-glucosamine = a UDP-3-O-[(3R)-3-hydroxyacyl]-N-acetyl-alpha-D-glucosamine + holo-[ACP]. Its pathway is glycolipid biosynthesis; lipid IV(A) biosynthesis; lipid IV(A) from (3R)-3-hydroxytetradecanoyl-[acyl-carrier-protein] and UDP-N-acetyl-alpha-D-glucosamine: step 1/6. Its function is as follows. Involved in the biosynthesis of lipid A, a phosphorylated glycolipid that anchors the lipopolysaccharide to the outer membrane of the cell. In Anaeromyxobacter sp. (strain K), this protein is Acyl-[acyl-carrier-protein]--UDP-N-acetylglucosamine O-acyltransferase.